A 465-amino-acid polypeptide reads, in one-letter code: tRNA modification GTPase MnmE (465 aa).

3 residues coordinate (6S)-5-formyl-5,6,7,8-tetrahydrofolate: Arg25, Glu87, and Arg126. Positions 222 to 386 (TIRVVLRGLP…LIERLVQFAE (165 aa)) constitute a TrmE-type G domain. Residues 232–237 (NAGKSR), 251–257 (TDQAGTT), and 276–279 (DTAG) contribute to the GTP site. Mg(2+) contacts are provided by Ser236 and Thr257. Residue Lys465 coordinates (6S)-5-formyl-5,6,7,8-tetrahydrofolate.

Belongs to the TRAFAC class TrmE-Era-EngA-EngB-Septin-like GTPase superfamily. TrmE GTPase family. As to quaternary structure, homodimer. Heterotetramer of two MnmE and two MnmG subunits. It depends on K(+) as a cofactor.

It is found in the cytoplasm. In terms of biological role, exhibits a very high intrinsic GTPase hydrolysis rate. Involved in the addition of a carboxymethylaminomethyl (cmnm) group at the wobble position (U34) of certain tRNAs, forming tRNA-cmnm(5)s(2)U34. This is tRNA modification GTPase MnmE from Rhodopirellula baltica (strain DSM 10527 / NCIMB 13988 / SH1).